A 180-amino-acid chain; its full sequence is ATP-dependent protease subunit HslV (180 aa).

The active site involves Thr8. Na(+) contacts are provided by Ala165, Cys168, and Thr171.

The protein belongs to the peptidase T1B family. HslV subfamily. In terms of assembly, a double ring-shaped homohexamer of HslV is capped on each side by a ring-shaped HslU homohexamer. The assembly of the HslU/HslV complex is dependent on binding of ATP.

Its subcellular location is the cytoplasm. It carries out the reaction ATP-dependent cleavage of peptide bonds with broad specificity.. With respect to regulation, allosterically activated by HslU binding. Functionally, protease subunit of a proteasome-like degradation complex believed to be a general protein degrading machinery. In Macrococcus caseolyticus (strain JCSC5402) (Macrococcoides caseolyticum), this protein is ATP-dependent protease subunit HslV.